A 533-amino-acid chain; its full sequence is Probable dolichyl pyrophosphate Man9GlcNAc2 alpha-1,3-glucosyltransferase (533 aa).

Positions 1–20 (MPKKKPAKHSGEDDITIPVS) are disordered. A run of 9 helical transmembrane segments spans residues 42–64 (FLCISLFALLIRSAVTMYPYSGA), 149–169 (WTVLSSDAFIFFPAALFFVLV), 184–204 (WHIAMILLNPCLILIDHGHFQ), 214–234 (VGAIAAVLCESEVLTCVLFSL), 264–284 (ILSVIKLGIAVIVTFVIFWWP), 360–380 (GFLYGLLNSSMAFYLFSFQVH), 422–442 (LLIPYLTLSFLFTVIYHSPGN), 463–483 (VFLLRTHFFISVVLHVLYLTI), and 491–511 (FLFEALIMILCFSYFIMFAFY).

It belongs to the ALG6/ALG8 glucosyltransferase family.

It is found in the endoplasmic reticulum membrane. It carries out the reaction an alpha-D-Man-(1-&gt;2)-alpha-D-Man-(1-&gt;2)-alpha-D-Man-(1-&gt;3)-[alpha-D-Man-(1-&gt;2)-alpha-D-Man-(1-&gt;3)-[alpha-D-Man-(1-&gt;2)-alpha-D-Man-(1-&gt;6)]-alpha-D-Man-(1-&gt;6)]-beta-D-Man-(1-&gt;4)-beta-D-GlcNAc-(1-&gt;4)-alpha-D-GlcNAc-diphospho-di-trans,poly-cis-dolichol + a di-trans,poly-cis-dolichyl beta-D-glucosyl phosphate = an alpha-D-Glc-(1-&gt;3)-alpha-D-Man-(1-&gt;2)-alpha-D-Man-(1-&gt;2)-alpha-D-Man-(1-&gt;3)-[alpha-D-Man-(1-&gt;2)-alpha-D-Man-(1-&gt;3)-[alpha-D-Man-(1-&gt;2)-alpha-D-Man-(1-&gt;6)]-alpha-D-Man-(1-&gt;6)]-beta-D-Man-(1-&gt;4)-beta-D-GlcNAc-(1-&gt;4)-alpha-D-GlcNAc-diphospho-di-trans,poly-cis-dolichol + a di-trans,poly-cis-dolichyl phosphate + H(+). The protein operates within protein modification; protein glycosylation. Adds the first glucose residue to the lipid-linked oligosaccharide precursor for N-linked glycosylation. Transfers glucose from dolichyl phosphate glucose (Dol-P-Glc) onto the lipid-linked oligosaccharide Man(9)GlcNAc(2)-PP-Dol. This is Probable dolichyl pyrophosphate Man9GlcNAc2 alpha-1,3-glucosyltransferase from Arabidopsis thaliana (Mouse-ear cress).